The sequence spans 179 residues: Bifunctional protein PyrR (179 aa).

The short motif at valine 100–threonine 112 is the PRPP-binding element.

Belongs to the purine/pyrimidine phosphoribosyltransferase family. PyrR subfamily.

It catalyses the reaction UMP + diphosphate = 5-phospho-alpha-D-ribose 1-diphosphate + uracil. Regulates the transcription of the pyrimidine nucleotide (pyr) operon in response to exogenous pyrimidines. Its function is as follows. Also displays a weak uracil phosphoribosyltransferase activity which is not physiologically significant. This Actinobacillus succinogenes (strain ATCC 55618 / DSM 22257 / CCUG 43843 / 130Z) protein is Bifunctional protein PyrR.